Consider the following 77-residue polypeptide: Early E3 9.0 kDa glycoprotein (77 aa).

The N-linked (GlcNAc...) asparagine; by host glycan is linked to asparagine 7. A helical transmembrane segment spans residues 27–47; sequence ITILIVIGILILSVILYFIFC.

The protein belongs to the adenoviridae E3A-1 family.

Its subcellular location is the host nucleus membrane. This Human adenovirus B serotype 3 (HAdV-3) protein is Early E3 9.0 kDa glycoprotein.